Consider the following 110-residue polypeptide: Neural hemoglobin (110 aa).

One can recognise a Globin domain in the interval 2 to 110 (VNWAAVVDDF…HAIDDILSHL (109 aa)). Residue His70 participates in heme binding.

It belongs to the globin family. As to quaternary structure, homotetramer. Self-associates in the deoxy state. Seems to dissociate upon oxygenation.

Functionally, acts as an oxygen store capable of sustaining neuronal activity in an anoxic environment for 5 to 30 minutes. This is Neural hemoglobin from Cerebratulus lacteus (Milky ribbon worm).